The following is a 99-amino-acid chain: DNA-binding protein Fis (99 aa).

A DNA-binding region (H-T-H motif) is located at residues 75-94; it reads QTRAAIMMGINRGTLRKKLK.

It belongs to the transcriptional regulatory Fis family. As to quaternary structure, homodimer.

Activates ribosomal RNA transcription. Plays a direct role in upstream activation of rRNA promoters. The polypeptide is DNA-binding protein Fis (Tolumonas auensis (strain DSM 9187 / NBRC 110442 / TA 4)).